A 2184-amino-acid chain; its full sequence is Genome polyprotein (2184 aa).

The N-myristoyl glycine; by host moiety is linked to residue G2. Over 2–1494 (GAQVSTQKTG…HVSRAFICLQ (1493 aa)) the chain is Cytoplasmic. Positions 567–583 (FYQGDVQNAVEGAMVRV) are amphipathic alpha-helix. Catalysis depends on for protease 2A activity residues H871 and D889. The Zn(2+) site is built by C906 and C908. The For protease 2A activity role is filled by C960. Residues C966 and H968 each coordinate Zn(2+). The tract at residues 1100-1172 (NNGWLKKFTE…EQSAPSQGDQ (73 aa)) is membrane-binding. The oligomerization stretch occupies residues 1100 to 1238 (NNGWLKKFTE…SPGAGKSVAT (139 aa)). Residues 1121–1125 (AIKIQ) form an RNA-binding region. In terms of domain architecture, SF3 helicase spans 1204-1360 (EKKMSNYIQF…SMYSQNGKIN (157 aa)). 3 residues coordinate Zn(2+): C1368, C1380, and C1385. A C4-type; degenerate zinc finger spans residues 1368–1385 (CDEDCCPVNFKKCCPLVC). Residues 1412–1419 (EYNHRHSV) are RNA-binding. Residues 1423–1428 (LEALFQ) are oligomerization. An intramembrane segment occupies 1495-1510 (ALTTFVSVAGIIYIIY). Residues 1511–2184 (KLFAGFQGAY…TLRRKWLDSF (674 aa)) lie on the Cytoplasmic side of the membrane. Y1520 bears the O-(5'-phospho-RNA)-tyrosine mark. The Peptidase C3 domain maps to 1540–1718 (GPAFEFAVAM…FSAALLRHYF (179 aa)). Catalysis depends on for protease 3C activity residues H1579, E1610, and C1686. The RdRp catalytic domain maps to 1949-2065 (GHLIAFDYSG…SYPWPIDASL (117 aa)). Positions 1955 and 2051 each coordinate Mg(2+).

This sequence belongs to the picornaviruses polyprotein family. In terms of assembly, interacts with capsid protein VP1 and capsid protein VP3 to form heterotrimeric protomers. Interacts with capsid protein VP0, and capsid protein VP3 to form heterotrimeric protomers. Five protomers subsequently associate to form pentamers which serve as building blocks for the capsid. Interacts with capsid protein VP2, capsid protein VP3 and capsid protein VP4 following cleavage of capsid protein VP0. As to quaternary structure, interacts with capsid protein VP1 and capsid protein VP3 in the mature capsid. In terms of assembly, interacts with capsid protein VP0 and capsid protein VP1 to form heterotrimeric protomers. Five protomers subsequently associate to form pentamers which serve as building blocks for the capsid. Interacts with capsid protein VP4 in the mature capsid. Interacts with protein 2C; this interaction may be important for virion morphogenesis. Interacts with capsid protein VP1 and capsid protein VP3. As to quaternary structure, homodimer. In terms of assembly, homohexamer; forms a hexameric ring structure with 6-fold symmetry characteristic of AAA+ ATPases. Interacts (via N-terminus) with host RTN3 (via reticulon domain); this interaction is important for viral replication. Interacts with capsid protein VP3; this interaction may be important for virion morphogenesis. Interacts with protein 3CD. As to quaternary structure, homodimer. Interacts with host GBF1. Interacts (via GOLD domain) with host ACBD3 (via GOLD domain); this interaction allows the formation of a viral protein 3A/ACBD3 heterotetramer with a 2:2 stoichiometry, which will stimulate the recruitment of host PI4KB in order to synthesize PI4P at the viral RNA replication sites. In terms of assembly, interacts with RNA-directed RNA polymerase. Interacts with protein 3AB and with RNA-directed RNA polymerase. As to quaternary structure, interacts with Viral protein genome-linked and with protein 3CD. Mg(2+) serves as cofactor. Post-translationally, specific enzymatic cleavages in vivo by the viral proteases yield processing intermediates and the mature proteins. In terms of processing, myristoylation is required for the formation of pentamers during virus assembly. Further assembly of 12 pentamers and a molecule of genomic RNA generates the provirion. During virion maturation, immature virions are rendered infectious following cleavage of VP0 into VP4 and VP2. This maturation seems to be an autocatalytic event triggered by the presence of RNA in the capsid and it is followed by a conformational change infectious virion. Post-translationally, myristoylation is required during RNA encapsidation and formation of the mature virus particle. In terms of processing, VPg is uridylylated by the polymerase into VPg-pUpU. This acts as a nucleotide-peptide primer for the genomic RNA replication.

Its subcellular location is the virion. It localises to the host cytoplasm. It is found in the host cytoplasmic vesicle membrane. The protein localises to the host nucleus. It catalyses the reaction a ribonucleoside 5'-triphosphate + H2O = a ribonucleoside 5'-diphosphate + phosphate + H(+). The enzyme catalyses Selective cleavage of Tyr-|-Gly bond in the picornavirus polyprotein.. It carries out the reaction RNA(n) + a ribonucleoside 5'-triphosphate = RNA(n+1) + diphosphate. The catalysed reaction is Selective cleavage of Gln-|-Gly bond in the poliovirus polyprotein. In other picornavirus reactions Glu may be substituted for Gln, and Ser or Thr for Gly.. Its activity is regulated as follows. Replication or transcription is subject to high level of random mutations by the nucleotide analog ribavirin. Functionally, forms an icosahedral capsid of pseudo T=3 symmetry with capsid proteins VP2 and VP3. The capsid is 300 Angstroms in diameter, composed of 60 copies of each capsid protein and enclosing the viral positive strand RNA genome. Capsid protein VP1 mainly forms the vertices of the capsid. Capsid protein VP1 interacts with host ITGA2/ITGB1 to provide virion attachment to target host cells. This attachment induces virion internalization predominantly through caveolin-mediated endocytosis. Tyrosine kinases are probably involved in the entry process. After binding to its receptor, the capsid undergoes conformational changes. Capsid protein VP1 N-terminus (that contains an amphipathic alpha-helix) and capsid protein VP4 are externalized. Together, they shape a pore in the host membrane through which viral genome is translocated to host cell cytoplasm. In terms of biological role, forms an icosahedral capsid of pseudo T=3 symmetry with capsid proteins VP2 and VP3. The capsid is 300 Angstroms in diameter, composed of 60 copies of each capsid protein and enclosing the viral positive strand RNA genome. Lies on the inner surface of the capsid shell. After binding to the host receptor, the capsid undergoes conformational changes. Capsid protein VP4 is released, Capsid protein VP1 N-terminus is externalized, and together, they shape a pore in the host membrane through which the viral genome is translocated into the host cell cytoplasm. Its function is as follows. Component of immature procapsids, which is cleaved into capsid proteins VP4 and VP2 after maturation. Allows the capsid to remain inactive before the maturation step. Functionally, cysteine protease that cleaves viral polyprotein and specific host proteins. It is responsible for the autocatalytic cleavage between the P1 and P2 regions, which is the first cleavage occurring in the polyprotein. Also cleaves the host translation initiation factor EIF4G1, in order to shut down the capped cellular mRNA translation. Inhibits the host nucleus-cytoplasm protein and RNA trafficking by cleaving host members of the nuclear pores. Counteracts stress granule formation probably by antagonizing its assembly or promoting its dissassembly. In terms of biological role, plays an essential role in the virus replication cycle by acting as a viroporin. Creates a pore in the host endoplasmic reticulum and as a consequence releases Ca2+ in the cytoplasm of infected cell. In turn, high levels of cytoplasmic calcium may trigger membrane trafficking and transport of viral ER-associated proteins to viroplasms, sites of viral genome replication. Induces and associates with structural rearrangements of intracellular membranes. Displays RNA-binding, nucleotide binding and NTPase activities. May play a role in virion morphogenesis and viral RNA encapsidation by interacting with the capsid protein VP3. Its function is as follows. Localizes the viral replication complex to the surface of membranous vesicles. Together with protein 3CD binds the Cis-Active RNA Element (CRE) which is involved in RNA synthesis initiation. Acts as a cofactor to stimulate the activity of 3D polymerase, maybe through a nucleid acid chaperone activity. Functionally, localizes the viral replication complex to the surface of membranous vesicles. It inhibits host cell endoplasmic reticulum-to-Golgi apparatus transport and causes the disassembly of the Golgi complex, possibly through GBF1 interaction. This would result in depletion of MHC, trail receptors and IFN receptors at the host cell surface. Plays an essential role in viral RNA replication by recruiting ACBD3 and PI4KB at the viral replication sites, thereby allowing the formation of the rearranged membranous structures where viral replication takes place. In terms of biological role, acts as a primer for viral RNA replication and remains covalently bound to viral genomic RNA. VPg is uridylylated prior to priming replication into VPg-pUpU. The oriI viral genomic sequence may act as a template for this. The VPg-pUpU is then used as primer on the genomic RNA poly(A) by the RNA-dependent RNA polymerase to replicate the viral genome. During genome replication, the VPg-RNA linkage is removed by the host TDP2, thereby accelerating replication. During the late stage of the replication cycle, host TDP2 is excluded from sites of viral RNA synthesis and encapsidation, allowing for the generation of progeny virions. Involved in the viral replication complex and viral polypeptide maturation. It exhibits protease activity with a specificity and catalytic efficiency that is different from protease 3C. Protein 3CD lacks polymerase activity. Protein 3CD binds to the 5'UTR of the viral genome. Its function is as follows. Replicates the viral genomic RNA on the surface of intracellular membranes. May form linear arrays of subunits that propagate along a strong head-to-tail interaction called interface-I. Covalently attaches UMP to a tyrosine of VPg, which is used to prime RNA synthesis. The positive stranded RNA genome is first replicated at virus induced membranous vesicles, creating a dsRNA genomic replication form. This dsRNA is then used as template to synthesize positive stranded RNA genomes. ss(+)RNA genomes are either translated, replicated or encapsidated. Functionally, major viral protease that mediates proteolytic processing of the polyprotein. Cleaves host EIF5B, contributing to host translation shutoff. Also cleaves host PABPC1, contributing to host translation shutoff. Cleaves host NLRP1, triggers host N-glycine-mediated degradation of the autoinhibitory NLRP1 N-terminal fragment. This chain is Genome polyprotein, found in Homo sapiens (Human).